The chain runs to 599 residues: Proline--tRNA ligase (599 aa).

It belongs to the class-II aminoacyl-tRNA synthetase family. ProS type 1 subfamily. As to quaternary structure, homodimer.

Its subcellular location is the cytoplasm. The catalysed reaction is tRNA(Pro) + L-proline + ATP = L-prolyl-tRNA(Pro) + AMP + diphosphate. Functionally, catalyzes the attachment of proline to tRNA(Pro) in a two-step reaction: proline is first activated by ATP to form Pro-AMP and then transferred to the acceptor end of tRNA(Pro). As ProRS can inadvertently accommodate and process non-cognate amino acids such as alanine and cysteine, to avoid such errors it has two additional distinct editing activities against alanine. One activity is designated as 'pretransfer' editing and involves the tRNA(Pro)-independent hydrolysis of activated Ala-AMP. The other activity is designated 'posttransfer' editing and involves deacylation of mischarged Ala-tRNA(Pro). The misacylated Cys-tRNA(Pro) is not edited by ProRS. The polypeptide is Proline--tRNA ligase (Prochlorococcus marinus (strain MIT 9303)).